The following is a 460-amino-acid chain: Cytochrome P450 CYP71D312 (460 aa).

Cys398 contacts heme.

It belongs to the cytochrome P450 family. Heme is required as a cofactor.

Functionally, probable heme-thiolate monooxygenase. This is Cytochrome P450 CYP71D312 from Panax ginseng (Korean ginseng).